The primary structure comprises 155 residues: Large ribosomal subunit protein uL30 (155 aa).

Belongs to the universal ribosomal protein uL30 family. Part of the 50S ribosomal subunit.

This chain is Large ribosomal subunit protein uL30, found in Pyrococcus horikoshii (strain ATCC 700860 / DSM 12428 / JCM 9974 / NBRC 100139 / OT-3).